Here is a 343-residue protein sequence, read N- to C-terminus: tRNA N6-adenosine threonylcarbamoyltransferase (343 aa).

Positions 120 and 124 each coordinate Fe cation. Substrate contacts are provided by residues 142 to 146, Asp-175, Gly-188, Asp-192, and Asn-281; that span reads VVSGG. Asp-310 contributes to the Fe cation binding site.

This sequence belongs to the KAE1 / TsaD family. Fe(2+) is required as a cofactor.

The protein localises to the cytoplasm. The catalysed reaction is L-threonylcarbamoyladenylate + adenosine(37) in tRNA = N(6)-L-threonylcarbamoyladenosine(37) in tRNA + AMP + H(+). Functionally, required for the formation of a threonylcarbamoyl group on adenosine at position 37 (t(6)A37) in tRNAs that read codons beginning with adenine. Is involved in the transfer of the threonylcarbamoyl moiety of threonylcarbamoyl-AMP (TC-AMP) to the N6 group of A37, together with TsaE and TsaB. TsaD likely plays a direct catalytic role in this reaction. The protein is tRNA N6-adenosine threonylcarbamoyltransferase of Bacillus thuringiensis subsp. konkukian (strain 97-27).